The sequence spans 759 residues: ARF GTPase-activating protein GIT2 (759 aa).

The region spanning 1–124 (MSKRLRSSEV…AFVHRLPCRD (124 aa)) is the Arf-GAP domain. A C4-type zinc finger spans residues 11–34 (CADCSGPDPSWASVNRGTFLCDEC). 3 ANK repeats span residues 132–161 (DLSK…QANF), 166–195 (KGNT…DPGT), and 199–228 (SGKT…ELTD). The disordered stretch occupies residues 379 to 422 (QHSVESQDNDQPDYDSVASDEDTDLETTASKTNRQKSLDSDLSD). The span at 385–403 (QDNDQPDYDSVASDEDTDL) shows a compositional bias: acidic residues. Phosphoserine occurs at positions 394 and 397. A Phosphothreonine modification is found at T401. Phosphoserine occurs at positions 415, 418, and 421. Residues 437 to 478 (LVASEAKIQQLMKVNNNLSDELRIMQKKLQTLQSENSNLRKQ) are a coiled coil. Positions 480–499 (TTNVYQVQTGSEYTDTSNHS) are enriched in polar residues. Disordered regions lie at residues 480–538 (TTNV…EESR) and 554–643 (VTSS…TEDV). Y484 carries the phosphotyrosine modification. Residues 555–569 (TSSSSLPSFPSTLSW) show a composition bias toward low complexity. Phosphoserine is present on residues S559, S562, and S570. Residues 570–583 (SRDESARRASRLEK) show a composition bias toward basic and acidic residues. Residues 584 to 597 (QNSTPESDYDNTPN) are compositionally biased toward polar residues. The residue at position 587 (T587) is a Phosphothreonine. S614 bears the Phosphoserine mark.

May form heterooligomers with GIT1. Directly interacts with protein Piccolo/PCLO. Interacts with PPFIA1 and PPFIA2. Interacts with ARHGEF7. Identified in a complex with ARHGEF6 and BIN2. Interacts with PAK3. Interacts with PXN/paxillin. Interacts with TGFB1I1. Forms a complex with EFNB1 and GRB4/NCK2.

GTPase-activating protein for ADP ribosylation factor family members, including ARF1. This is ARF GTPase-activating protein GIT2 (GIT2) from Homo sapiens (Human).